The sequence spans 943 residues: 2-oxoglutarate dehydrogenase E1 component (943 aa).

Belongs to the alpha-ketoglutarate dehydrogenase family. In terms of assembly, homodimer. Part of the 2-oxoglutarate dehydrogenase (OGDH) complex composed of E1 (2-oxoglutarate dehydrogenase), E2 (dihydrolipoamide succinyltransferase) and E3 (dihydrolipoamide dehydrogenase); the complex contains multiple copies of the three enzymatic components (E1, E2 and E3). Thiamine diphosphate is required as a cofactor.

It catalyses the reaction N(6)-[(R)-lipoyl]-L-lysyl-[protein] + 2-oxoglutarate + H(+) = N(6)-[(R)-S(8)-succinyldihydrolipoyl]-L-lysyl-[protein] + CO2. Its function is as follows. E1 component of the 2-oxoglutarate dehydrogenase (OGDH) complex which catalyzes the decarboxylation of 2-oxoglutarate, the first step in the conversion of 2-oxoglutarate to succinyl-CoA and CO(2). The sequence is that of 2-oxoglutarate dehydrogenase E1 component from Shouchella clausii (strain KSM-K16) (Alkalihalobacillus clausii).